The following is a 452-amino-acid chain: UDP-N-acetylmuramoylalanine--D-glutamate ligase (452 aa).

An ATP-binding site is contributed by 113-119 (GTNGKTT).

The protein belongs to the MurCDEF family.

It localises to the cytoplasm. The enzyme catalyses UDP-N-acetyl-alpha-D-muramoyl-L-alanine + D-glutamate + ATP = UDP-N-acetyl-alpha-D-muramoyl-L-alanyl-D-glutamate + ADP + phosphate + H(+). It participates in cell wall biogenesis; peptidoglycan biosynthesis. In terms of biological role, cell wall formation. Catalyzes the addition of glutamate to the nucleotide precursor UDP-N-acetylmuramoyl-L-alanine (UMA). The protein is UDP-N-acetylmuramoylalanine--D-glutamate ligase (murD) of Synechocystis sp. (strain ATCC 27184 / PCC 6803 / Kazusa).